Here is a 105-residue protein sequence, read N- to C-terminus: uncharacterized protein (105 aa).

The disordered stretch occupies residues 80–105; it reads TGGPTSSTCTRRSDLATGRGSDRRPD.

This is an uncharacterized protein from Micromonospora rosea.